The chain runs to 381 residues: Alkanesulfonate monooxygenase (381 aa).

Belongs to the SsuD family. In terms of assembly, homotetramer.

The enzyme catalyses an alkanesulfonate + FMNH2 + O2 = an aldehyde + FMN + sulfite + H2O + 2 H(+). Its function is as follows. Catalyzes the desulfonation of aliphatic sulfonates. This Escherichia coli O157:H7 protein is Alkanesulfonate monooxygenase.